Here is a 469-residue protein sequence, read N- to C-terminus: Ectonucleoside triphosphate diphosphohydrolase 5 (469 aa).

Positions Met-1–Arg-24 are cleaved as a signal peptide. The active-site Proton acceptor is Glu-172. N-linked (GlcNAc...) asparagine glycosylation is present at Asn-232. Disulfide bonds link Cys-272–Cys-303 and Cys-363–Cys-377.

Belongs to the GDA1/CD39 NTPase family. Monomer; active form. Homodimer; disulfide-linked. Homodimers are enzymatically inactive. Requires Ca(2+) as cofactor. Mg(2+) serves as cofactor. Post-translationally, N-glycosylated; high-mannose type. Expressed in fetal cells and most adult tissues.

It is found in the endoplasmic reticulum. The protein localises to the secreted. The enzyme catalyses a ribonucleoside 5'-diphosphate + H2O = a ribonucleoside 5'-phosphate + phosphate + H(+). The catalysed reaction is GDP + H2O = GMP + phosphate + H(+). It carries out the reaction UDP + H2O = UMP + phosphate + H(+). It catalyses the reaction IDP + H2O = IMP + phosphate + H(+). The enzyme catalyses CDP + H2O = CMP + phosphate + H(+). The catalysed reaction is ADP + H2O = AMP + phosphate + H(+). The protein operates within protein modification; protein glycosylation. Its function is as follows. Hydrolyzes nucleoside diphosphates with a preference for GDP, IDP and UDP compared to ADP and CDP. In the lumen of the endoplasmic reticulum, hydrolyzes UDP that acts as an end-product feedback inhibitor of the UDP-Glc:glycoprotein glucosyltransferases. UMP can be transported back by an UDP-sugar antiporter to the cytosol where it is consumed to regenerate UDP-glucose. Therefore, it positively regulates protein reglucosylation by clearing UDP from the ER lumen and by promoting the regeneration of UDP-glucose. Protein reglucosylation is essential to proper glycoprotein folding and quality control in the ER. The polypeptide is Ectonucleoside triphosphate diphosphohydrolase 5 (ENTPD5) (Mesocricetus auratus (Golden hamster)).